The sequence spans 564 residues: Kelch repeat and BTB domain-containing protein 1 (564 aa).

A BTB domain is found at 21-88 (CDINIVINDE…IYGIPLSLTN (68 aa)). The BACK domain occupies 123 to 219 (CIDFYIYADK…SLLSPQVIKS (97 aa)). Kelch repeat units follow at residues 252-297 (IELI…VLDN), 298-346 (IIYM…ADDE), 347-395 (YIYC…MLNG), 397-441 (IYVI…VHDG), 442-492 (KIYI…SAHN), and 494-539 (LYVG…CEPI).

Interacts (via BTB domain) with host CUL3.

It localises to the host cytoplasm. Its function is as follows. Probable substrate-specific adapter of CUL3-containing E3 ubiquitin-protein ligases which mediate the ubiquitination and subsequent proteasomal degradation of host target proteins. This is Kelch repeat and BTB domain-containing protein 1 (KBTB1) from Cowpox virus (strain GRI-90 / Grishak) (CPV).